The following is a 133-amino-acid chain: Small ribosomal subunit protein bS6 (133 aa).

The tract at residues 93–133 (KTAVTEPSPMMKEEPRRERRDDSAPRQERAEKKTETTEDNA) is disordered. Over residues 103–133 (MKEEPRRERRDDSAPRQERAEKKTETTEDNA) the composition is skewed to basic and acidic residues.

Belongs to the bacterial ribosomal protein bS6 family.

Functionally, binds together with bS18 to 16S ribosomal RNA. The polypeptide is Small ribosomal subunit protein bS6 (Alteromonas mediterranea (strain DSM 17117 / CIP 110805 / LMG 28347 / Deep ecotype)).